A 1187-amino-acid polypeptide reads, in one-letter code: DENN domain and WD repeat-containing protein SCD1 (1187 aa).

Positions 19–179 (TVDGDLGFHG…NVPLPTPGKD (161 aa)) constitute a uDENN domain. Residues 199–330 (SLPQADISLQ…EFSTLRNDIL (132 aa)) form the cDENN domain. The 106-residue stretch at 332–437 (LLHPNVVAID…ERRLSSDEKS (106 aa)) folds into the dDENN domain. 2 disordered regions span residues 508-536 (SGALESNGRHPPSSPPGKNTKEDNFSSME) and 765-793 (SAGLPSPRPKDVSVSDETQQPSEASGRSW). A compositionally biased stretch (basic and acidic residues) spans 526 to 536 (NTKEDNFSSME). The segment covering 779–793 (SDETQQPSEASGRSW) has biased composition (polar residues). 8 WD repeats span residues 841 to 892 (GHGG…SELR), 897 to 934 (GHTGTVRAISSDRGKIVSGSDDLSVIVWDKQTTQLLEE), 937 to 975 (GHDSQVSCVKMLSGERVLTAAHDGTVKMWDVRTDMCVAT), 978 to 1017 (RCSSAILSLEYDDSTGILAAAGRDTVANIWDIRSGKQMHK), 1020 to 1057 (GHTKWIRSIRMVEDTLITGSDDWTARVWSVSRGSCDAV), 1060 to 1099 (CHAGPVQSVEYSPFDKGIITGSADGLLRFWENDEGGIKCV), 1104 to 1141 (LHSSSILSINAGENWLGIGAADNSMSLFHRPSNAGTKV), and 1152 to 1187 (RTAAVVRCVASDLERKRICSGGRNGVLRLWDATINI).

Interacts with FLS2. In terms of tissue distribution, expressed in roots, rosette and cauline leaves, buds and flowers.

It localises to the cell membrane. The protein localises to the cytoplasmic vesicle. It is found in the clathrin-coated vesicle. In terms of biological role, involved in growth and development through its role in cytokinesis and polarized cell expansion. Required for plasma membrane internalization. May function in clathrin-mediated membrane trafficking, including plasma membrane endocytosis, essential to both cytokinesis and cell expansion. Acts as a negative regulator of basal resistance against bacteria. The sequence is that of DENN domain and WD repeat-containing protein SCD1 from Arabidopsis thaliana (Mouse-ear cress).